The following is a 153-amino-acid chain: UPF0756 membrane protein Pjdr2_2290 (153 aa).

5 consecutive transmembrane segments (helical) span residues L6–A26, L50–V70, L75–A95, M111–V131, and G132–G152.

Belongs to the UPF0756 family.

The protein resides in the cell membrane. The chain is UPF0756 membrane protein Pjdr2_2290 from Paenibacillus sp. (strain JDR-2).